Reading from the N-terminus, the 205-residue chain is Dephospho-CoA kinase (205 aa).

In terms of domain architecture, DPCK spans 3–204; that stretch reads KVGLTGGIGA…HRAHQPGESQ (202 aa). 11–16 contributes to the ATP binding site; the sequence is GAGKSE.

It belongs to the CoaE family.

The protein localises to the cytoplasm. The enzyme catalyses 3'-dephospho-CoA + ATP = ADP + CoA + H(+). The protein operates within cofactor biosynthesis; coenzyme A biosynthesis; CoA from (R)-pantothenate: step 5/5. Functionally, catalyzes the phosphorylation of the 3'-hydroxyl group of dephosphocoenzyme A to form coenzyme A. This Streptomyces avermitilis (strain ATCC 31267 / DSM 46492 / JCM 5070 / NBRC 14893 / NCIMB 12804 / NRRL 8165 / MA-4680) protein is Dephospho-CoA kinase.